Here is a 124-residue protein sequence, read N- to C-terminus: Orexigenic neuropeptide QRFP (124 aa).

An N-terminal signal peptide occupies residues 1–17 (MRCLCSWLCLLLPLSAC). A propeptide spanning residues 18-79 (FPLLDRRGPT…REHTGFRLGR (62 aa)) is cleaved from the precursor. The tract at residues 63 to 100 (KEQQASRREHTGFRLGRQDSGSEATGFLPTDSEKASGP) is disordered. Gln80 carries the pyrrolidone carboxylic acid modification. Phe122 carries the phenylalanine amide modification.

The protein belongs to the RFamide neuropeptide family. In terms of assembly, ligand for the G-protein coupled receptor QRFPR/GPR103. Expressed in the brain with highest expression levels in the hypothalamus and optic nerve. Also expressed in the trachea and mammary gland.

It is found in the secreted. Functionally, stimulates feeding and grooming behavior, metabolic rate and locomotor activity and increases blood pressure. May have orexigenic activity. May promote aldosterone secretion by the adrenal gland. This chain is Orexigenic neuropeptide QRFP (Qrfp), found in Rattus norvegicus (Rat).